Consider the following 156-residue polypeptide: ATP synthase subunit b (156 aa).

Residues 7-27 traverse the membrane as a helical segment; it reads LFAQIIVFFGLVWFTMKFVWP.

This sequence belongs to the ATPase B chain family. F-type ATPases have 2 components, F(1) - the catalytic core - and F(0) - the membrane proton channel. F(1) has five subunits: alpha(3), beta(3), gamma(1), delta(1), epsilon(1). F(0) has three main subunits: a(1), b(2) and c(10-14). The alpha and beta chains form an alternating ring which encloses part of the gamma chain. F(1) is attached to F(0) by a central stalk formed by the gamma and epsilon chains, while a peripheral stalk is formed by the delta and b chains.

The protein localises to the cell inner membrane. In terms of biological role, f(1)F(0) ATP synthase produces ATP from ADP in the presence of a proton or sodium gradient. F-type ATPases consist of two structural domains, F(1) containing the extramembraneous catalytic core and F(0) containing the membrane proton channel, linked together by a central stalk and a peripheral stalk. During catalysis, ATP synthesis in the catalytic domain of F(1) is coupled via a rotary mechanism of the central stalk subunits to proton translocation. Its function is as follows. Component of the F(0) channel, it forms part of the peripheral stalk, linking F(1) to F(0). This Neisseria meningitidis serogroup C (strain 053442) protein is ATP synthase subunit b.